Consider the following 91-residue polypeptide: MFPLSLLQPSHSPLCPCSQPALTLFGQLEDKNLGDNDLERRMQSVNEVCQLLFQDMDISRIRDQIRQPGAPESEGTSPNTGKDGKDPGNSL.

Residues 62 to 91 (RDQIRQPGAPESEGTSPNTGKDGKDPGNSL) form a disordered region. Positions 82-91 (KDGKDPGNSL) are enriched in basic and acidic residues.

The protein belongs to the small heat shock protein (HSP20) family.

This chain is Heat shock protein 30E (hsp30e), found in Xenopus laevis (African clawed frog).